Consider the following 1396-residue polypeptide: MFKEGSRDDAALAKEGLFDKLEIGIASDVTIRDKWSCGEIKKPETINYRTFKPEKGGLFCEKIFGPTKDWECYCGKYKKIKHKGIVCDRCGVEVTLSKVRRERMAHIELAVPIVHIWFFKTTPSRIGNVLGMTASDLERVIYYEEYVVIDPGNTDLVKKQLLNDAKYREVVEKWGKDAFVAKMGGEAVYDLLKSEDLESLLGELKDRLRKTKSQQARMKLAKRLKIVEGFVSSSNRPEWMVLKNIPVVPPDLRPLVPLDGGRFATSDLNDLYRRVINRNNRLKAILRLKTPEVIVRNEKRMLQEAVDALFDNGRHGHPVMGAGNRPLKSLSEMLKGKNGRFRQNLLGKRVDYSGRSVIIVGPELKFNQCGLPKEMALELFEPFIIKRLKDQGSVYTIRSAKKMIQRGAPEVWDVLEEIIKGHPVLLNRAPTLHRLGIQAFEPVLIEGKAIRVHPLVCAAFNADFDGDQMAVHVPLSIEAQLEAKVLMMAPDNIFLPSSGKPVATPSKDMTLGIYYLMADPTYFPEEHGGKTKVFKDEVEVLRALNAGGFILKDEICGSRRDETGRGIHIHEAIKVRIDGQIIETTPGRVFFNTIVPKELGFQNYSMPSKRISELILQCYKKVGLEATVRFLDDLKELGFVQSTKAAISMGLKDVRIPEIKKEILKDAYDKVAVVKKQYEDGIITDGERHSKTISIWTEVSDLLSNALYAEIKKQTNSKHNPLFLMIDSGARGNKSQLKQLGALRGLMAKPNGAIIESPITSNFREGLTVLEYSISSHGARKGLADTALKTADSGYLTRRLVDVAQDVIITEKDCGTLNHIEVSTIRQGSEELLPLKDRIYGRTVSENVYQPGDKSNVLAYAGDVLTSSQAEAIDDAGIDSVKIRSTLTCESRRGVCAKCYGLNLANGRLIGLGEAVGIIAAQSIGEPGTQLTMRTFHLGGIAATSSTPEIVAECDGILVYLDLRFVVDQEGNNLVLNKMGALHLVRDEGRSLSEYKKLLSTKSIESLATFPVELGAKILVDDGAAVTAGQRIAEVELHNIPIICDKPGFVHYEDLVEGVSTEKVTNKNTGLVELIVKQHRGELHPQIAIYADANMQELVGTYAIPSGAIISVEEGQRIAPGMLLARLPRGAIKTKDITGGLPRVAELVEARKPEDAADIAKIDGVVDFKGIQKNKRILVVRDEVTGMEEEHLISLTKHLIVQRGDSVIKGQQLTDGLVVPHEILEICGVRELQKYLVNEVQEVYRLQGVDINDKHIEIIVRQMLQKVRITDPGDTTLLFGEDVDKKEFYEENRRTEEDGGKPAQAVPVLLGITKASLGTESFISAASFQDTTRVLTDAACSSKTDYLLGFKENVIMGHMIPGGTGFDTHKRIKQHLEKEQEDLVFDFDSEFESVAG.

4 residues coordinate Zn(2+): C72, C74, C87, and C90. Residues D463, D465, and D467 each coordinate Mg(2+). Zn(2+) is bound by residues C814, C889, C896, and C899.

This sequence belongs to the RNA polymerase beta' chain family. The RNAP catalytic core consists of 2 alpha, 1 beta, 1 beta' and 1 omega subunit. When a sigma factor is associated with the core the holoenzyme is formed, which can initiate transcription. Requires Mg(2+) as cofactor. Zn(2+) is required as a cofactor.

The catalysed reaction is RNA(n) + a ribonucleoside 5'-triphosphate = RNA(n+1) + diphosphate. In terms of biological role, DNA-dependent RNA polymerase catalyzes the transcription of DNA into RNA using the four ribonucleoside triphosphates as substrates. This is DNA-directed RNA polymerase subunit beta' from Chlamydia muridarum (strain MoPn / Nigg).